We begin with the raw amino-acid sequence, 1095 residues long: DNA polymerase delta catalytic subunit (1095 aa).

Residues 1 to 11 (MNRSGISKKRP) are compositionally biased toward basic residues. Residues 1–37 (MNRSGISKKRPPPSNTPPPAGKHRATGDSTPSPAIGT) form a disordered region. Residues Cys-1007, Cys-1010, Cys-1020, and Cys-1023 each contribute to the Zn(2+) site. A CysA-type zinc finger spans residues 1007–1023 (CVGCKVPISNGTLCASC). Residues Cys-1052, Cys-1055, Cys-1065, and Cys-1070 each coordinate [4Fe-4S] cluster. Residues 1052-1070 (CQECQGSLHQDVLCTSRDC) carry the CysB motif motif.

The protein belongs to the DNA polymerase type-B family. As to quaternary structure, heterodimer with subunits of 125 kDa and 50 kDa. The 125 kDa subunit contains the polymerase active site and most likely the active site for the 3'-5' exonuclease activity. Requires [4Fe-4S] cluster as cofactor.

Its subcellular location is the nucleus. It catalyses the reaction DNA(n) + a 2'-deoxyribonucleoside 5'-triphosphate = DNA(n+1) + diphosphate. Its function is as follows. This polymerase possesses two enzymatic activities: DNA synthesis (polymerase) and an exonucleolytic activity that degrades single-stranded DNA in the 3'- to 5'-direction. The sequence is that of DNA polymerase delta catalytic subunit (POLD1) from Arabidopsis thaliana (Mouse-ear cress).